A 402-amino-acid polypeptide reads, in one-letter code: Peptidyl-prolyl cis-trans isomerase FKBP8 (402 aa).

Residues Asp-28–Leu-39 are compositionally biased toward acidic residues. Positions Asp-28–Glu-54 are disordered. Residues Gly-110–Glu-194 form the PPIase FKBP-type domain. Residues Ala-211 to Asn-244 form a TPR 1 repeat. Glycyl lysine isopeptide (Lys-Gly) (interchain with G-Cter in ubiquitin) cross-links involve residues Lys-239, Lys-261, Lys-263, and Lys-274. TPR repeat units follow at residues Val-262 to Asn-295 and Ile-296 to Asn-329. Ser-286 is modified (phosphoserine). Glycyl lysine isopeptide (Lys-Gly) (interchain with G-Cter in ubiquitin) cross-links involve residues Lys-297, Lys-304, Lys-324, Lys-330, Lys-338, Lys-341, and Lys-342. The helical transmembrane segment at Trp-380–Ala-400 threads the bilayer.

In terms of assembly, homomultimers or heteromultimers (Potential). Forms heterodimer with calmodulin. When activated by calmodulin and calcium, interacts with the BH4 domain of BCL2 and weakly with BCLX isoform Bcl-X(L). Does not bind and inhibit calcineurin. Interacts with ZFYVE27; may negatively regulate ZFYVE27 phosphorylation. It depends on Ca(2+) as a cofactor. Ubiquitinated by PRKN during mitophagy, leading to its degradation and enhancement of mitophagy. Deubiquitinated by USP30. In terms of tissue distribution, detected throughout the embryonic body, in caudal neural tube, limbs and head. Detected in adult retina, brain, heart, kidney, liver, pancreas, lung, testis and urinary bladder (at protein level). Detected in adult brain, kidney, liver, testis and trigeminal nerve, and in embryo. Detected at lower levels in lung, spleen, heart and ovary. Widely expressed in forebrain. Detected in the Purkinje cell layer in the cerebellum and in hippocampus neurons.

Its subcellular location is the mitochondrion membrane. It catalyses the reaction [protein]-peptidylproline (omega=180) = [protein]-peptidylproline (omega=0). Functionally, constitutively inactive PPiase, which becomes active when bound to calmodulin and calcium. Seems to act as a chaperone for BCL2, targets it to the mitochondria and modulates its phosphorylation state. The BCL2/FKBP8/calmodulin/calcium complex probably interferes with the binding of BCL2 to its targets. The active form of FKBP8 may therefore play a role in the regulation of apoptosis. Required for normal embryonic development. In Mus musculus (Mouse), this protein is Peptidyl-prolyl cis-trans isomerase FKBP8 (Fkbp8).